The chain runs to 213 residues: Glycerol-3-phosphate acyltransferase (213 aa).

6 consecutive transmembrane segments (helical) span residues 3-23, 54-76, 83-100, 110-130, 142-162, and 163-183; these read ILLL…LWIG, TITF…WLGI, IIGF…FTGF, AGVL…VFAL, SITA…IHFL, and LDGY…VIIF.

It belongs to the PlsY family. As to quaternary structure, probably interacts with PlsX.

Its subcellular location is the cell membrane. The catalysed reaction is an acyl phosphate + sn-glycerol 3-phosphate = a 1-acyl-sn-glycero-3-phosphate + phosphate. It functions in the pathway lipid metabolism; phospholipid metabolism. Functionally, catalyzes the transfer of an acyl group from acyl-phosphate (acyl-PO(4)) to glycerol-3-phosphate (G3P) to form lysophosphatidic acid (LPA). This enzyme utilizes acyl-phosphate as fatty acyl donor, but not acyl-CoA or acyl-ACP. The sequence is that of Glycerol-3-phosphate acyltransferase from Streptococcus thermophilus (strain ATCC BAA-491 / LMD-9).